The primary structure comprises 542 residues: Sterile alpha motif domain-containing protein 11 (542 aa).

Positions 268 to 364 (LLALPPQGPP…GRGLLSGSTL (97 aa)) are disordered. The segment covering 273–285 (PQGPPGPGPPIPP) has biased composition (pro residues). Thr342 is modified (phosphothreonine). The 66-residue stretch at 404–469 (WTVDDVCNFV…AQVAKRLGRV (66 aa)) folds into the SAM domain. The segment at 486–542 (LQAPELSPGHQPLSPATTTSPYEGTHLPTGQASPKQENGSGTIALLSGAPDPSQLLQ) is disordered. Ser499 bears the Phosphoserine mark. Over residues 499–526 (SPATTTSPYEGTHLPTGQASPKQENGSG) the composition is skewed to polar residues.

In terms of assembly, self-associates. Component of a Polycomb group (PcG) multiprotein PRC1-like complex. Interacts with SAMD7 and PHC2. In terms of tissue distribution, expressed in the outer nuclear layer of rod photoreceptors in the retina (at protein level). Predominantly expressed in retinal photoreceptors and pineal gland.

Its subcellular location is the nucleus. Functionally, component of a Polycomb group (PcG) multiprotein PRC1-like complex, essential for establishing rod photoreceptor cell identity and function by silencing nonrod gene expression in developing rod photoreceptor cells. This chain is Sterile alpha motif domain-containing protein 11 (Samd11), found in Mus musculus (Mouse).